Here is a 160-residue protein sequence, read N- to C-terminus: MAVIKKPDLSDPVLKMKLAKGMGHNYYGEPAWPNDLLYIFPVCIFGTFAIVIGLSVMEPAAMGEPANPFATPLEILPEWYFYPVFQLLRVIPNKLLGVLLMAAVPAGLLTVPFIENINKFQNPFRRPIATTVFLLGTVVAVYLGIGSTFPIDQSLTLGLF.

Helical transmembrane passes span 36 to 56, 95 to 115, and 131 to 151; these read LLYIFPVCIFGTFAIVIGLSV, LLGVLLMAAVPAGLLTVPFIE, and TVFLLGTVVAVYLGIGSTFPI.

It belongs to the cytochrome b family. PetD subfamily. The 4 large subunits of the cytochrome b6-f complex are cytochrome b6, subunit IV (17 kDa polypeptide, petD), cytochrome f and the Rieske protein, while the 4 small subunits are petG, petL, petM and petN. The complex functions as a dimer.

Its subcellular location is the plastid. It localises to the chloroplast thylakoid membrane. In terms of biological role, component of the cytochrome b6-f complex, which mediates electron transfer between photosystem II (PSII) and photosystem I (PSI), cyclic electron flow around PSI, and state transitions. This chain is Cytochrome b6-f complex subunit 4, found in Stigeoclonium helveticum (Green alga).